We begin with the raw amino-acid sequence, 788 residues long: Protein translocase subunit SecA 2 (788 aa).

ATP contacts are provided by residues glutamine 86, 104–108 (GEGKT), and aspartate 493.

The protein belongs to the SecA family. In terms of assembly, monomer and homodimer. Part of the essential Sec protein translocation apparatus which comprises SecA, SecYEG and auxiliary proteins SecDF. Other proteins may also be involved.

The protein localises to the cell membrane. It localises to the cytoplasm. It catalyses the reaction ATP + H2O + cellular proteinSide 1 = ADP + phosphate + cellular proteinSide 2.. In terms of biological role, part of the Sec protein translocase complex. Interacts with the SecYEG preprotein conducting channel. Has a central role in coupling the hydrolysis of ATP to the transfer of proteins into and across the cell membrane, serving as an ATP-driven molecular motor driving the stepwise translocation of polypeptide chains across the membrane. This chain is Protein translocase subunit SecA 2, found in Bacillus anthracis.